A 450-amino-acid chain; its full sequence is E3 ubiquitin-protein ligase XB3 (450 aa).

6 ANK repeats span residues 11–40 (GDEHDFFRAAQLGDLDALAALLAADPSLAR), 46–75 (DRLSVLHIAAANGRIEVLSMFLDRGAPPDA), 79–108 (HKQTPLMLAAMHGKIDCVLKLLQADANILM), 113–142 (HARTCLHHAAYYGHVDCLQAILAAAQTTPV), 158–187 (HGATPLHLAARQGRPGCVQVLLENGAIVSA), and 195–225 (PGSTSLHLAARSGNLDCIRKLLAWGADRLQR). The tract at residues 291-312 (ILNGTKYSLPSPSPGDDSADDD) is disordered. An RING-type zinc finger spans residues 323-372 (CCICFDQACTIEVQDCGHQMCAPCTLALCCHNKPNPTTLTPPSPACPFCR). The segment at 385–450 (SACDPDKPSS…SNLDKPEHDL (66 aa)) is disordered.

Interacts (via ankyrin repeats) with XA21. In terms of processing, phosphorylated by XA21.

It catalyses the reaction S-ubiquitinyl-[E2 ubiquitin-conjugating enzyme]-L-cysteine + [acceptor protein]-L-lysine = [E2 ubiquitin-conjugating enzyme]-L-cysteine + N(6)-ubiquitinyl-[acceptor protein]-L-lysine.. Its pathway is protein modification; protein ubiquitination. Its function is as follows. E3 ubiquitin-protein ligase required for full accumulation of the LRR receptor kinase XA21 and XA21-mediated disease resistance. Binding to XA21 may stabilize the receptor kinase and maintain its protein level. Autoubiquitinated in vitro. In Oryza sativa subsp. japonica (Rice), this protein is E3 ubiquitin-protein ligase XB3 (XB3).